The following is a 248-amino-acid chain: 2,3-bisphosphoglycerate-dependent phosphoglycerate mutase (248 aa).

Substrate contacts are provided by residues 8-15 (RHGESEWN), 21-22 (TG), R60, 87-90 (ERHY), K98, 114-115 (RR), and 183-184 (GN). Catalysis depends on H9, which acts as the Tele-phosphohistidine intermediate. E87 (proton donor/acceptor) is an active-site residue.

The protein belongs to the phosphoglycerate mutase family. BPG-dependent PGAM subfamily.

It catalyses the reaction (2R)-2-phosphoglycerate = (2R)-3-phosphoglycerate. It participates in carbohydrate degradation; glycolysis; pyruvate from D-glyceraldehyde 3-phosphate: step 3/5. Catalyzes the interconversion of 2-phosphoglycerate and 3-phosphoglycerate. This Borrelia turicatae (strain 91E135) protein is 2,3-bisphosphoglycerate-dependent phosphoglycerate mutase.